Reading from the N-terminus, the 208-residue chain is ATP-dependent Clp protease proteolytic subunit (208 aa).

Ser-105 functions as the Nucleophile in the catalytic mechanism. His-130 is an active-site residue.

Belongs to the peptidase S14 family. As to quaternary structure, fourteen ClpP subunits assemble into 2 heptameric rings which stack back to back to give a disk-like structure with a central cavity, resembling the structure of eukaryotic proteasomes.

The protein resides in the cytoplasm. It carries out the reaction Hydrolysis of proteins to small peptides in the presence of ATP and magnesium. alpha-casein is the usual test substrate. In the absence of ATP, only oligopeptides shorter than five residues are hydrolyzed (such as succinyl-Leu-Tyr-|-NHMec, and Leu-Tyr-Leu-|-Tyr-Trp, in which cleavage of the -Tyr-|-Leu- and -Tyr-|-Trp bonds also occurs).. In terms of biological role, cleaves peptides in various proteins in a process that requires ATP hydrolysis. Has a chymotrypsin-like activity. Plays a major role in the degradation of misfolded proteins. The polypeptide is ATP-dependent Clp protease proteolytic subunit (Xylella fastidiosa (strain 9a5c)).